Reading from the N-terminus, the 126-residue chain is Large ribosomal subunit protein bL17 (126 aa).

The protein belongs to the bacterial ribosomal protein bL17 family. As to quaternary structure, part of the 50S ribosomal subunit. Contacts protein L32.

This Xylella fastidiosa (strain 9a5c) protein is Large ribosomal subunit protein bL17.